A 487-amino-acid polypeptide reads, in one-letter code: N-succinylglutamate 5-semialdehyde dehydrogenase (487 aa).

Residues 1-23 (MTHFIKGQWHTGKGHDVASSNPA) are disordered. NAD(+) is bound at residue 220 to 225 (GSSRTG). Residues glutamate 243 and cysteine 277 contribute to the active site.

Belongs to the aldehyde dehydrogenase family. AstD subfamily.

The enzyme catalyses N-succinyl-L-glutamate 5-semialdehyde + NAD(+) + H2O = N-succinyl-L-glutamate + NADH + 2 H(+). It functions in the pathway amino-acid degradation; L-arginine degradation via AST pathway; L-glutamate and succinate from L-arginine: step 4/5. In terms of biological role, catalyzes the NAD-dependent reduction of succinylglutamate semialdehyde into succinylglutamate. This is N-succinylglutamate 5-semialdehyde dehydrogenase from Shewanella oneidensis (strain ATCC 700550 / JCM 31522 / CIP 106686 / LMG 19005 / NCIMB 14063 / MR-1).